A 266-amino-acid polypeptide reads, in one-letter code: Elongator complex protein 6 (266 aa).

The protein belongs to the ELP6 family. Component of the elongator complex which consists of ELP1, ELP2, ELP3, ELP4, ELP5 and ELP6.

Its subcellular location is the cytoplasm. The protein resides in the nucleus. It functions in the pathway tRNA modification; 5-methoxycarbonylmethyl-2-thiouridine-tRNA biosynthesis. Functionally, component of the elongator complex which is required for multiple tRNA modifications, including mcm5U (5-methoxycarbonylmethyl uridine), mcm5s2U (5-methoxycarbonylmethyl-2-thiouridine), and ncm5U (5-carbamoylmethyl uridine). The elongator complex catalyzes formation of carboxymethyluridine in the wobble base at position 34 in tRNAs. Involved in cell migration. The protein is Elongator complex protein 6 of Homo sapiens (Human).